The primary structure comprises 71 residues: Small ribosomal subunit protein bS21 (71 aa).

Residues 38–71 form a disordered region; the sequence is YEKPTTVRKRAKAAAQKRHAKKLSRENARRVRLY. Residues 43 to 59 show a composition bias toward basic residues; that stretch reads TVRKRAKAAAQKRHAKK. The segment covering 60–71 has biased composition (basic and acidic residues); sequence LSRENARRVRLY.

The protein belongs to the bacterial ribosomal protein bS21 family.

The protein is Small ribosomal subunit protein bS21 of Aliivibrio fischeri (strain ATCC 700601 / ES114) (Vibrio fischeri).